Here is a 352-residue protein sequence, read N- to C-terminus: Protein-glutamate methylesterase/protein-glutamine glutaminase 2 (352 aa).

The region spanning 1 to 116 (MVVDDSAVVR…KQFLTDSADE (116 aa)) is the Response regulatory domain. Position 50 is a 4-aspartylphosphate (D50). Residues 162-352 (AQTTERIVAI…MAREIVTQLQ (191 aa)) form the CheB-type methylesterase domain. Active-site residues include S174, H200, and D296.

Belongs to the CheB family. In terms of processing, phosphorylated by CheA. Phosphorylation of the N-terminal regulatory domain activates the methylesterase activity.

The protein localises to the cytoplasm. It catalyses the reaction [protein]-L-glutamate 5-O-methyl ester + H2O = L-glutamyl-[protein] + methanol + H(+). It carries out the reaction L-glutaminyl-[protein] + H2O = L-glutamyl-[protein] + NH4(+). Involved in chemotaxis. Part of a chemotaxis signal transduction system that modulates chemotaxis in response to various stimuli. Catalyzes the demethylation of specific methylglutamate residues introduced into the chemoreceptors (methyl-accepting chemotaxis proteins or MCP) by CheR. Also mediates the irreversible deamidation of specific glutamine residues to glutamic acid. This chain is Protein-glutamate methylesterase/protein-glutamine glutaminase 2, found in Xanthomonas euvesicatoria pv. vesicatoria (strain 85-10) (Xanthomonas campestris pv. vesicatoria).